Consider the following 215-residue polypeptide: Large ribosomal subunit protein uL4 (215 aa).

The disordered stretch occupies residues 46-76 (TAKSKNRAEVSGGGRKPWAQKGGGRARAGSI). The segment covering 56 to 71 (SGGGRKPWAQKGGGRA) has biased composition (gly residues).

Belongs to the universal ribosomal protein uL4 family. Part of the 50S ribosomal subunit.

One of the primary rRNA binding proteins, this protein initially binds near the 5'-end of the 23S rRNA. It is important during the early stages of 50S assembly. It makes multiple contacts with different domains of the 23S rRNA in the assembled 50S subunit and ribosome. Functionally, forms part of the polypeptide exit tunnel. This is Large ribosomal subunit protein uL4 from Helicobacter acinonychis (strain Sheeba).